Here is a 627-residue protein sequence, read N- to C-terminus: Pescadillo homolog (627 aa).

The BRCT domain maps to 321–414; the sequence is RLRTLFKGLK…QLLPTNKYFI (94 aa). Disordered stretches follow at residues 436–471, 489–562, and 596–627; these read PEEK…AVDQ, YKKY…LQAR, and FEAG…KLGK. A phosphoserine mark is found at Ser-453 and Ser-457. Acidic residues-rich tracts occupy residues 453–471 and 498–521; these read SDDD…AVDQ and VNED…EELD. Basic and acidic residues predominate over residues 522–533; it reads EQAKRLKEEKQK. The segment covering 540–549 has biased composition (basic residues); the sequence is KVHKVNKRQL. Basic and acidic residues-rich tracts occupy residues 550–559 and 596–605; these read HKAEVDEHRL and FEAGEKEARK. The span at 616–627 shows a compositional bias: low complexity; the sequence is AAAAAKASKLGK.

Belongs to the pescadillo family.

It is found in the nucleus. The protein resides in the nucleolus. Its subcellular location is the nucleoplasm. Required for maturation of ribosomal RNAs and formation of the large ribosomal subunit. The polypeptide is Pescadillo homolog (Drosophila ananassae (Fruit fly)).